Consider the following 394-residue polypeptide: Ribulose bisphosphate carboxylase large chain (394 aa).

K5 is modified (N6,N6,N6-trimethyllysine). Residues N114 and T164 each coordinate substrate. The active-site Proton acceptor is K166. Residue K168 participates in substrate binding. Positions 192, 194, and 195 each coordinate Mg(2+). K192 carries the N6-carboxylysine modification. H285 acts as the Proton acceptor in catalysis. Residues R286, H318, and S370 each contribute to the substrate site.

The protein belongs to the RuBisCO large chain family. Type I subfamily. As to quaternary structure, heterohexadecamer of 8 large chains and 8 small chains. The cofactor is Mg(2+).

The protein localises to the plastid. Its subcellular location is the chloroplast. The catalysed reaction is 2 (2R)-3-phosphoglycerate + 2 H(+) = D-ribulose 1,5-bisphosphate + CO2 + H2O. It catalyses the reaction D-ribulose 1,5-bisphosphate + O2 = 2-phosphoglycolate + (2R)-3-phosphoglycerate + 2 H(+). Functionally, ruBisCO catalyzes two reactions: the carboxylation of D-ribulose 1,5-bisphosphate, the primary event in carbon dioxide fixation, as well as the oxidative fragmentation of the pentose substrate in the photorespiration process. Both reactions occur simultaneously and in competition at the same active site. This Euryale ferox (Gorgon plant) protein is Ribulose bisphosphate carboxylase large chain (rbcL).